Here is a 327-residue protein sequence, read N- to C-terminus: Mycothiol acetyltransferase (327 aa).

2 consecutive N-acetyltransferase domains span residues 11 to 159 and 162 to 327; these read EPHG…VTLP and VQIR…EGTS. Glu42 serves as a coordination point for 1D-myo-inositol 2-(L-cysteinylamino)-2-deoxy-alpha-D-glucopyranoside. An acetyl-CoA-binding site is contributed by 89 to 91; the sequence is LVI. 1D-myo-inositol 2-(L-cysteinylamino)-2-deoxy-alpha-D-glucopyranoside-binding residues include Glu189, Lys228, and Glu251. Residues 255-257 and 262-268 contribute to the acetyl-CoA site; these read LGV and QGLGLGR. Residue Tyr289 participates in 1D-myo-inositol 2-(L-cysteinylamino)-2-deoxy-alpha-D-glucopyranoside binding. Residue 294–299 participates in acetyl-CoA binding; it reads NAPAIR.

It belongs to the acetyltransferase family. MshD subfamily. In terms of assembly, monomer.

The enzyme catalyses 1D-myo-inositol 2-(L-cysteinylamino)-2-deoxy-alpha-D-glucopyranoside + acetyl-CoA = mycothiol + CoA + H(+). Catalyzes the transfer of acetyl from acetyl-CoA to desacetylmycothiol (Cys-GlcN-Ins) to form mycothiol. In Acidothermus cellulolyticus (strain ATCC 43068 / DSM 8971 / 11B), this protein is Mycothiol acetyltransferase.